The chain runs to 552 residues: Protein FAM234A (552 aa).

Residues 1–48 (MTDGKDLEAEIHPLKSENRKVPENAGALAGKEPRGTPAPQTRLSHCRT) are Cytoplasmic-facing. A helical; Signal-anchor for type II membrane protein membrane pass occupies residues 49–69 (AAFFLSLFACLLVVFVVSFII). Over 70–552 (PCPDRPALQG…LSRLRYRSEA (483 aa)) the chain is Extracellular. Residues Asn115, Asn238, and Asn473 are each glycosylated (N-linked (GlcNAc...) asparagine).

The protein belongs to the FAM234 family.

It is found in the membrane. In Bos taurus (Bovine), this protein is Protein FAM234A (FAM234A).